The sequence spans 249 residues: Probable amino-acid import ATP-binding protein YxeO (249 aa).

Residues Ile2–Ile239 enclose the ABC transporter domain. Gly34 to Ser41 lines the ATP pocket.

It belongs to the ABC transporter superfamily. In terms of assembly, the complex is composed of two ATP-binding proteins (YxeO), two transmembrane proteins (YxeN) and a solute-binding protein (YxeM).

The protein resides in the cell membrane. Its function is as follows. Probably part of the ABC transporter complex YxeMNO that could be involved in amino-acid import. May transport S-methylcysteine. Responsible for energy coupling to the transport system. In Bacillus subtilis (strain 168), this protein is Probable amino-acid import ATP-binding protein YxeO (yxeO).